Reading from the N-terminus, the 135-residue chain is U-myrmeciitoxin(01)-Mg7a (135 aa).

A signal peptide spans 1-21; that stretch reads MKLSCLSLALAIILLLAIVHS. Positions 22 to 72 are excised as a propeptide; sequence PNMEVKALAGPEADAIGFADAFGEADAFGEADAFGEADAFGEADAFGEADA. A disordered region spans residues 69–95; it reads EADAKRSKSSSKTKPKKPKKPKKKIKI. The segment covering 75-93 has biased composition (basic residues); sequence SKSSSKTKPKKPKKPKKKI. Serine 120 is a glycosylation site (O-linked (GalNAc...) serine). 2 O-linked (GalNAc...) threonine glycosylation sites follow: threonine 129 and threonine 130.

Belongs to the formicidae venom precursor-01 superfamily. In terms of processing, glycosylation is critical to maintaining the aqueous solubility of this protein, but does not directly contribute to its activity. As to expression, expressed by the venom gland.

Its subcellular location is the secreted. It localises to the target cell membrane. Neurotoxin that triggers pain behavior and inflammation in mammals, and is paralytic and lethal to insects. Causes a time-dependent increase in cell leak current. May act by targeting membranes. The protein is U-myrmeciitoxin(01)-Mg7a of Myrmecia gulosa (Red bulldog ant).